Consider the following 482-residue polypeptide: Protein translocase subunit SecY (482 aa).

The interval 1–22 (MVIKKPANKVDKKSTFKSSNKK) is disordered. Helical transmembrane passes span 41-61 (ILFT…TVPG), 92-112 (FSIL…VQLL), 137-157 (LTKI…IFTL), 177-197 (AFYY…MLWI), 201-221 (ITIK…IIIS), 243-263 (IFFS…LVIL), 303-323 (VIPV…SQII), 342-362 (FNTW…TFLY), 405-425 (VVGS…SKLT), and 426-446 (QLPS…SVAI).

Belongs to the SecY/SEC61-alpha family. Component of the Sec protein translocase complex. Heterotrimer consisting of SecY, SecE and SecG subunits. The heterotrimers can form oligomers, although 1 heterotrimer is thought to be able to translocate proteins. Interacts with the ribosome. Interacts with SecDF, and other proteins may be involved. Interacts with SecA.

The protein resides in the cell membrane. The central subunit of the protein translocation channel SecYEG. Consists of two halves formed by TMs 1-5 and 6-10. These two domains form a lateral gate at the front which open onto the bilayer between TMs 2 and 7, and are clamped together by SecE at the back. The channel is closed by both a pore ring composed of hydrophobic SecY resides and a short helix (helix 2A) on the extracellular side of the membrane which forms a plug. The plug probably moves laterally to allow the channel to open. The ring and the pore may move independently. This chain is Protein translocase subunit SecY, found in Mycoplasma capricolum subsp. capricolum (strain California kid / ATCC 27343 / NCTC 10154).